The following is a 194-amino-acid chain: Molybdenum cofactor guanylyltransferase (194 aa).

Residues leucine 12–glycine 14, lysine 25, asparagine 53, aspartate 70, and aspartate 100 each bind GTP. Aspartate 100 contacts Mg(2+).

It belongs to the MobA family. Monomer. Mg(2+) serves as cofactor.

Its subcellular location is the cytoplasm. It catalyses the reaction Mo-molybdopterin + GTP + H(+) = Mo-molybdopterin guanine dinucleotide + diphosphate. Transfers a GMP moiety from GTP to Mo-molybdopterin (Mo-MPT) cofactor (Moco or molybdenum cofactor) to form Mo-molybdopterin guanine dinucleotide (Mo-MGD) cofactor. This Aliivibrio fischeri (strain MJ11) (Vibrio fischeri) protein is Molybdenum cofactor guanylyltransferase.